The sequence spans 209 residues: Probable endopeptidase Cgl2188 (209 aa).

Residues 1–35 (MGKHRRNNSNATRKAVAASAVALGATAAIASPAQA) form the signal peptide. Positions 95 to 209 (ASTGQAIVDA…YMPFHSAVRF (115 aa)) constitute a NlpC/P60 domain. The active-site Nucleophile is Cys-125. The active-site Proton acceptor is the His-173. Residue His-185 is part of the active site.

Belongs to the peptidase C40 family.

Its subcellular location is the secreted. The polypeptide is Probable endopeptidase Cgl2188 (Corynebacterium glutamicum (strain ATCC 13032 / DSM 20300 / JCM 1318 / BCRC 11384 / CCUG 27702 / LMG 3730 / NBRC 12168 / NCIMB 10025 / NRRL B-2784 / 534)).